Reading from the N-terminus, the 358-residue chain is Aminomethyltransferase (358 aa).

It belongs to the GcvT family. As to quaternary structure, the glycine cleavage system is composed of four proteins: P, T, L and H.

It catalyses the reaction N(6)-[(R)-S(8)-aminomethyldihydrolipoyl]-L-lysyl-[protein] + (6S)-5,6,7,8-tetrahydrofolate = N(6)-[(R)-dihydrolipoyl]-L-lysyl-[protein] + (6R)-5,10-methylene-5,6,7,8-tetrahydrofolate + NH4(+). Its function is as follows. The glycine cleavage system catalyzes the degradation of glycine. The chain is Aminomethyltransferase from Francisella tularensis subsp. tularensis (strain FSC 198).